Reading from the N-terminus, the 782-residue chain is Translation initiation factor IF-2 (782 aa).

The interval 47–196 is disordered; it reads DNAIDGTNKK…TPPKPKELPE (150 aa). Residues 53–65 are compositionally biased toward basic and acidic residues; it reads TNKKAEAPKKETT. The segment covering 66 to 81 has biased composition (polar residues); the sequence is SNENGNSKGPNKPNMT. Residues 82–93 are compositionally biased toward low complexity; sequence NSNEKSNKPNKP. Residues 115–129 show a composition bias toward polar residues; sequence KPANTSNQTQSSGNK. The span at 133–170 shows a compositional bias: low complexity; the sequence is GGQKRNNNNNSNRPGGGNPNRPGGNNRPNRGGNFNNKG. The region spanning 283–452 is the tr-type G domain; sequence ERPPVVTIMG…LLVSEVEELK (170 aa). The interval 292–299 is G1; the sequence is GHVDHGKT. 292–299 is a GTP binding site; that stretch reads GHVDHGKT. Residues 317-321 are G2; the sequence is GITQH. The tract at residues 338–341 is G3; sequence DTPG. Residues 338–342 and 392–395 each bind GTP; these read DTPGH and NKID. The G4 stretch occupies residues 392-395; the sequence is NKID. Residues 428–430 are G5; that stretch reads SAK.

The protein belongs to the TRAFAC class translation factor GTPase superfamily. Classic translation factor GTPase family. IF-2 subfamily.

Its subcellular location is the cytoplasm. Its function is as follows. One of the essential components for the initiation of protein synthesis. Protects formylmethionyl-tRNA from spontaneous hydrolysis and promotes its binding to the 30S ribosomal subunits. Also involved in the hydrolysis of GTP during the formation of the 70S ribosomal complex. The sequence is that of Translation initiation factor IF-2 from Listeria innocua serovar 6a (strain ATCC BAA-680 / CLIP 11262).